We begin with the raw amino-acid sequence, 196 residues long: MRLIFLGPPGAGKGTQAKRLTDKYGIPQLSTGDMLRAAVSAGTEIGKRAKAVMDAGGLVSDDIVNQIVSERIEAPDCAKGFILDGYPRTVPQAKALADNMRKKNQVLDAVIELKVDEEALIRRIENRVAETIAAGGTVRSDDNPEAFRKRLTEYREKTAPLSAYYSEQGELVTLDGMADVDAVTEAIERVLEKASA.

Position 10–15 (10–15 (GAGKGT)) interacts with ATP. The segment at 30 to 59 (STGDMLRAAVSAGTEIGKRAKAVMDAGGLV) is NMP. AMP-binding positions include Thr-31, Arg-36, 57–59 (GLV), 85–88 (GYPR), and Gln-92. Positions 126-142 (NRVAETIAAGGTVRSDD) are LID. Residue Arg-127 participates in ATP binding. AMP contacts are provided by Arg-139 and Arg-150. Ala-178 provides a ligand contact to ATP.

Belongs to the adenylate kinase family. As to quaternary structure, monomer.

It is found in the cytoplasm. It catalyses the reaction AMP + ATP = 2 ADP. It functions in the pathway purine metabolism; AMP biosynthesis via salvage pathway; AMP from ADP: step 1/1. Catalyzes the reversible transfer of the terminal phosphate group between ATP and AMP. Plays an important role in cellular energy homeostasis and in adenine nucleotide metabolism. The protein is Adenylate kinase of Agrobacterium fabrum (strain C58 / ATCC 33970) (Agrobacterium tumefaciens (strain C58)).